The chain runs to 101 residues: Ascorbate-specific PTS system EIIB component (101 aa).

A PTS EIIB type-2 domain is found at 1–100 (MTVRILAVCG…VIKEHFPQDV (100 aa)). C9 acts as the Phosphocysteine intermediate in catalysis. C9 is subject to Phosphocysteine.

The protein resides in the cytoplasm. The catalysed reaction is N(pros)-phospho-L-histidyl-[protein] + L-ascorbate(out) = L-ascorbate 6-phosphate(in) + L-histidyl-[protein]. Functionally, the phosphoenolpyruvate-dependent sugar phosphotransferase system (sugar PTS), a major carbohydrate active transport system, catalyzes the phosphorylation of incoming sugar substrates concomitantly with their translocation across the cell membrane. The enzyme II UlaABC PTS system is involved in ascorbate transport. The chain is Ascorbate-specific PTS system EIIB component (ulaB) from Escherichia coli O157:H7.